The primary structure comprises 643 residues: Phosphomethylpyrimidine synthase (643 aa).

Substrate is bound by residues Asn-248, Met-277, Tyr-306, His-342, 362-364 (SRG), 403-406 (DGLR), and Glu-442. Zn(2+) is bound at residue His-446. Position 469 (Tyr-469) interacts with substrate. A Zn(2+)-binding site is contributed by His-510. Residues Cys-590, Cys-593, and Cys-598 each coordinate [4Fe-4S] cluster.

Belongs to the ThiC family. Homodimer. Requires [4Fe-4S] cluster as cofactor.

The catalysed reaction is 5-amino-1-(5-phospho-beta-D-ribosyl)imidazole + S-adenosyl-L-methionine = 4-amino-2-methyl-5-(phosphooxymethyl)pyrimidine + CO + 5'-deoxyadenosine + formate + L-methionine + 3 H(+). The protein operates within cofactor biosynthesis; thiamine diphosphate biosynthesis. Its function is as follows. Catalyzes the synthesis of the hydroxymethylpyrimidine phosphate (HMP-P) moiety of thiamine from aminoimidazole ribotide (AIR) in a radical S-adenosyl-L-methionine (SAM)-dependent reaction. This chain is Phosphomethylpyrimidine synthase, found in Burkholderia cenocepacia (strain ATCC BAA-245 / DSM 16553 / LMG 16656 / NCTC 13227 / J2315 / CF5610) (Burkholderia cepacia (strain J2315)).